The primary structure comprises 357 residues: Thiamine thiazole synthase, chloroplastic (357 aa).

Substrate contacts are provided by residues Ala-102, 123 to 124 (EQ), Gly-131, and Val-196. A 2,3-didehydroalanine (Cys) modification is found at Cys-233. Substrate contacts are provided by residues Asp-235, His-250, Met-304, and 314 to 316 (RMG).

The protein belongs to the THI4 family. Homooctamer. Fe cation serves as cofactor. During the catalytic reaction, a sulfide is transferred from Cys-233 to a reaction intermediate, generating a dehydroalanine residue.

It is found in the plastid. The protein localises to the chloroplast. It catalyses the reaction [ADP-thiazole synthase]-L-cysteine + glycine + NAD(+) = [ADP-thiazole synthase]-dehydroalanine + ADP-5-ethyl-4-methylthiazole-2-carboxylate + nicotinamide + 3 H2O + 2 H(+). Functionally, involved in biosynthesis of the thiamine precursor thiazole. Catalyzes the conversion of NAD and glycine to adenosine diphosphate 5-(2-hydroxyethyl)-4-methylthiazole-2-carboxylic acid (ADT), an adenylated thiazole intermediate. The reaction includes an iron-dependent sulfide transfer from a conserved cysteine residue of the protein to a thiazole intermediate. The enzyme can only undergo a single turnover, which suggests it is a suicide enzyme. May have additional roles in adaptation to various stress conditions and in DNA damage tolerance. This chain is Thiamine thiazole synthase, chloroplastic, found in Chlamydomonas reinhardtii (Chlamydomonas smithii).